A 182-amino-acid chain; its full sequence is PTS system glucitol/sorbitol-specific EIIC component (182 aa).

Positions Met-1–Asn-182 constitute a PTS EIIC type-5 domain. 3 helical membrane-spanning segments follow: residues Gly-28–Gly-48, Val-63–Ala-83, and Thr-139–Val-159.

The protein resides in the cell membrane. Functionally, the phosphoenolpyruvate-dependent sugar phosphotransferase system (PTS), a major carbohydrate active transport system, catalyzes the phosphorylation of incoming sugar substrates concomitant with their translocation across the cell membrane. The enzyme II complex composed of SrlA, SrlB and SrlE is involved in glucitol/sorbitol transport. The sequence is that of PTS system glucitol/sorbitol-specific EIIC component (srlA) from Clostridium beijerinckii (strain ATCC 51743 / NCIMB 8052) (Clostridium acetobutylicum).